The following is a 314-amino-acid chain: Putative S-adenosyl-L-methionine-dependent methyltransferase MAV_0301 (314 aa).

S-adenosyl-L-methionine-binding positions include Asp-132 and 161-162 (DL).

It belongs to the UPF0677 family.

Exhibits S-adenosyl-L-methionine-dependent methyltransferase activity. The polypeptide is Putative S-adenosyl-L-methionine-dependent methyltransferase MAV_0301 (Mycobacterium avium (strain 104)).